A 412-amino-acid polypeptide reads, in one-letter code: ORC1-type DNA replication protein 2 (412 aa).

ATP contacts are provided by residues 61–65 (VGKTA), Tyr-207, and Arg-219.

The protein belongs to the CDC6/cdc18 family.

Functionally, involved in regulation of DNA replication. This chain is ORC1-type DNA replication protein 2 (cdc6b), found in Haloarcula marismortui (strain ATCC 43049 / DSM 3752 / JCM 8966 / VKM B-1809) (Halobacterium marismortui).